A 105-amino-acid polypeptide reads, in one-letter code: NADH-quinone oxidoreductase subunit K (105 aa).

Transmembrane regions (helical) follow at residues L8–L28, I34–F54, and V65–L85.

It belongs to the complex I subunit 4L family. NDH-1 is composed of 14 different subunits. Subunits NuoA, H, J, K, L, M, N constitute the membrane sector of the complex.

Its subcellular location is the cell inner membrane. The catalysed reaction is a quinone + NADH + 5 H(+)(in) = a quinol + NAD(+) + 4 H(+)(out). NDH-1 shuttles electrons from NADH, via FMN and iron-sulfur (Fe-S) centers, to quinones in the respiratory chain. The immediate electron acceptor for the enzyme in this species is believed to be ubiquinone. Couples the redox reaction to proton translocation (for every two electrons transferred, four hydrogen ions are translocated across the cytoplasmic membrane), and thus conserves the redox energy in a proton gradient. The protein is NADH-quinone oxidoreductase subunit K of Acidithiobacillus ferrooxidans (strain ATCC 23270 / DSM 14882 / CIP 104768 / NCIMB 8455) (Ferrobacillus ferrooxidans (strain ATCC 23270)).